The sequence spans 320 residues: Ferrochelatase (320 aa).

Positions 194 and 275 each coordinate Fe cation.

Belongs to the ferrochelatase family.

The protein resides in the cytoplasm. The catalysed reaction is heme b + 2 H(+) = protoporphyrin IX + Fe(2+). The protein operates within porphyrin-containing compound metabolism; protoheme biosynthesis; protoheme from protoporphyrin-IX: step 1/1. Its function is as follows. Catalyzes the ferrous insertion into protoporphyrin IX. The sequence is that of Ferrochelatase from Serratia proteamaculans (strain 568).